Here is a 529-residue protein sequence, read N- to C-terminus: Probable E3 ubiquitin-protein ligase MGRN1 (529 aa).

The RING-type zinc finger occupies 275–314; the sequence is ECVVCLSDLRDTLILPCRHLCLCNACADTLRYQANNCPIC. 2 disordered regions span residues 341–362 and 396–529; these read SPVLSQSSDHTEHSNADNIPPG and EMGD…VEEC. Composition is skewed to polar residues over residues 449 to 463 and 477 to 487; these read AQPQSVLPCSLSPSE and NSGSESRSLGV. Residues 501–511 show a composition bias toward low complexity; it reads SSLSQSESDPS. Residues 520 to 529 are compositionally biased toward polar residues; sequence ESWSTAVEEC.

Autoubiquitinated in vitro.

The enzyme catalyses S-ubiquitinyl-[E2 ubiquitin-conjugating enzyme]-L-cysteine + [acceptor protein]-L-lysine = [E2 ubiquitin-conjugating enzyme]-L-cysteine + N(6)-ubiquitinyl-[acceptor protein]-L-lysine.. It participates in protein modification; protein ubiquitination. Functionally, E3 ubiquitin-protein ligase. Also acts as a negative regulator of hedgehog signaling. The chain is Probable E3 ubiquitin-protein ligase MGRN1 (mgrn1) from Danio rerio (Zebrafish).